The primary structure comprises 404 residues: Argininosuccinate synthase (404 aa).

ATP-binding positions include 13-21 and Ala41; that span reads AYSGGLDTS. Residues Tyr93 and Ser98 each contribute to the L-citrulline site. Residue Gly123 participates in ATP binding. Residues Thr125, Asn129, and Asp130 each contribute to the L-aspartate site. Residue Asn129 coordinates L-citrulline. L-citrulline-binding residues include Arg133, Ser182, Ser191, Glu267, and Tyr279.

Belongs to the argininosuccinate synthase family. Type 1 subfamily. Homotetramer.

The protein localises to the cytoplasm. The enzyme catalyses L-citrulline + L-aspartate + ATP = 2-(N(omega)-L-arginino)succinate + AMP + diphosphate + H(+). Its pathway is amino-acid biosynthesis; L-arginine biosynthesis; L-arginine from L-ornithine and carbamoyl phosphate: step 2/3. The chain is Argininosuccinate synthase from Moritella profunda.